The primary structure comprises 454 residues: Alkaline extracellular protease (454 aa).

A signal peptide spans 1-15 (MKLATAFTILTAVLA). The propeptide occupies 16 to 157 (APLAAPAPAP…EIPASSNAKR (142 aa)). Positions 68–146 (FIVVFDSSAT…TVEPDTIVSL (79 aa)) constitute an Inhibitor I9 domain. N-linked (GlcNAc...) asparagine glycosylation occurs at Asn123. In terms of domain architecture, Peptidase S8 spans 166-454 (QWGLSRISHK…NAVAYNGVGI (289 aa)). Catalysis depends on charge relay system residues Asp200, His231, and Ser397.

It belongs to the peptidase S8 family. Post-translationally, the pro-region is removed through cleavage by XPR6 after Lys156-Arg157, which yields mature active XPR2. In terms of processing, the 10 consecutive -X-Ala- or -X-Pro- dipeptides located over 100 amino acids upstream of the N-terminal of mature XPR2 are subject to dipeptidyl aminopeptidase (DPAPase)-processing. DPAPase activity is not necessary for XPR6 cleavage and for secretion of mature active XPR2. N-glycosylated. Glycosylation within the pro-region has no effect on secretion and maturation at 18 degrees Celsius, but is required for secretion at 28 degrees Celsius.

Its subcellular location is the secreted. It carries out the reaction Hydrolysis of proteins with broad specificity for peptide bonds, and a preference for a large uncharged residue in P1. Hydrolyzes peptide amides.. The protease activity is completely inhibited by the serine inhibitor PMSF but is not affected by thiol group inhibitors and in the presence of dithiothreitol. In the presence of high concentrations of o-phenanthroline the protease activity is only partially inhibited. The pro-region plays an inhibitory role and may provide a mechanism for preventing premature activation in the secretory pathway. In terms of biological role, major secreted protein that belongs to the subtilisin family serine proteases. The polypeptide is Alkaline extracellular protease (Yarrowia lipolytica (strain CLIB 122 / E 150) (Yeast)).